Consider the following 181-residue polypeptide: RNA-binding protein (181 aa).

Residues 106–181 (FLTSVNPGES…DANTRKSKRK (76 aa)) form a disordered region. The segment covering 141–157 (RNSKKGAKKSSSARKKK) has biased composition (basic residues). Positions 160-172 (SSNSETDLSSDSD) are enriched in low complexity.

This sequence belongs to the phytoreovirus RNA-binding protein family.

The protein localises to the host cytoplasm. Functionally, constituent of viral factories. Binds to ssRNA and dsRNA. This chain is RNA-binding protein, found in Rice dwarf virus (isolate Akita) (RDV).